The primary structure comprises 252 residues: 2-succinyl-6-hydroxy-2,4-cyclohexadiene-1-carboxylate synthase (252 aa).

It belongs to the AB hydrolase superfamily. MenH family. As to quaternary structure, monomer.

It catalyses the reaction 5-enolpyruvoyl-6-hydroxy-2-succinyl-cyclohex-3-ene-1-carboxylate = (1R,6R)-6-hydroxy-2-succinyl-cyclohexa-2,4-diene-1-carboxylate + pyruvate. It functions in the pathway quinol/quinone metabolism; 1,4-dihydroxy-2-naphthoate biosynthesis; 1,4-dihydroxy-2-naphthoate from chorismate: step 3/7. The protein operates within quinol/quinone metabolism; menaquinone biosynthesis. Catalyzes a proton abstraction reaction that results in 2,5-elimination of pyruvate from 2-succinyl-5-enolpyruvyl-6-hydroxy-3-cyclohexene-1-carboxylate (SEPHCHC) and the formation of 2-succinyl-6-hydroxy-2,4-cyclohexadiene-1-carboxylate (SHCHC). This chain is 2-succinyl-6-hydroxy-2,4-cyclohexadiene-1-carboxylate synthase, found in Escherichia coli (strain SE11).